A 62-amino-acid polypeptide reads, in one-letter code: MVRLYRENRSKFYRVKCPDCENEQIIFEKASTVVDCVVCGHVLAEPRGGRAALKAEILAELE.

Positions 17, 20, 36, and 39 each coordinate Zn(2+). The C4-type zinc finger occupies 17–39 (CPDCENEQIIFEKASTVVDCVVC).

The protein belongs to the eukaryotic ribosomal protein eS27 family. In terms of assembly, part of the 30S ribosomal subunit. The cofactor is Zn(2+).

The protein is Small ribosomal subunit protein eS27 of Methanosphaerula palustris (strain ATCC BAA-1556 / DSM 19958 / E1-9c).